The sequence spans 308 residues: UDP-N-acetylenolpyruvoylglucosamine reductase (308 aa).

The FAD-binding PCMH-type domain occupies Val-32–Gly-196. Residue Arg-176 is part of the active site. The Proton donor role is filled by Ser-225. The active site involves Glu-296.

The protein belongs to the MurB family. FAD serves as cofactor.

It is found in the cytoplasm. It carries out the reaction UDP-N-acetyl-alpha-D-muramate + NADP(+) = UDP-N-acetyl-3-O-(1-carboxyvinyl)-alpha-D-glucosamine + NADPH + H(+). The protein operates within cell wall biogenesis; peptidoglycan biosynthesis. Its function is as follows. Cell wall formation. This Legionella pneumophila (strain Corby) protein is UDP-N-acetylenolpyruvoylglucosamine reductase.